The primary structure comprises 505 residues: AAA-ATPase At5g17760 (505 aa).

The chain crosses the membrane as a helical span at residues threonine 11–isoleucine 27. A disordered region spans residues glycine 136–aspartate 155. Positions glycine 137–arginine 151 are enriched in gly residues. Glycine 260–serine 267 is an ATP binding site.

It belongs to the AAA ATPase family. BCS1 subfamily. Mg(2+) serves as cofactor.

Its subcellular location is the membrane. The enzyme catalyses ATP + H2O = ADP + phosphate + H(+). The sequence is that of AAA-ATPase At5g17760 from Arabidopsis thaliana (Mouse-ear cress).